Consider the following 308-residue polypeptide: ADP,ATP carrier protein (308 aa).

Solcar repeat units lie at residues 6-99, 110-203, and 211-297; these read KNFM…FKRM, KWFA…LKPV, and NNFL…LQVI. The next 5 membrane-spanning stretches (helical) occupy residues 8–35, 76–100, 108–128, 179–200, and 214–234; these read FMVD…VKLL, TANV…KRMF, YWKW…VSLS, FNIS…YDSL, and LAAF…SYPI. Residues arginine 81 and lysine 93 each coordinate ADP. Arginine 238 provides a ligand contact to ADP. The interval 238–243 is important for transport activity; the sequence is RRRMMM. The Nucleotide carrier signature motif motif lies at 238–243; it reads RRRMMM. The helical transmembrane segment at 274–294 threads the bilayer; that stretch reads AGANILRAVAGAGVLAGYDQL.

The protein belongs to the mitochondrial carrier (TC 2.A.29) family. In terms of assembly, monomer.

The protein localises to the mitochondrion inner membrane. It catalyses the reaction ADP(in) + ATP(out) = ADP(out) + ATP(in). The matrix-open state (m-state) is inhibited by the membrane-permeable bongkrekic acid (BKA). The cytoplasmic-open state (c-state) is inhibited by the membrane-impermeable toxic inhibitor carboxyatractyloside (CATR). ADP:ATP antiporter that mediates import of ADP into the mitochondrial matrix for ATP synthesis, and export of ATP out to fuel the cell. Cycles between the cytoplasmic-open state (c-state) and the matrix-open state (m-state): operates by the alternating access mechanism with a single substrate-binding site intermittently exposed to either the cytosolic (c-state) or matrix (m-state) side of the inner mitochondrial membrane. The sequence is that of ADP,ATP carrier protein (ABT) from Chlamydomonas reinhardtii (Chlamydomonas smithii).